The sequence spans 329 residues: uncharacterized protein (329 aa).

Helical transmembrane passes span 13-35 (IPVL…WATI) and 229-248 (VIPA…SVVY).

The protein localises to the cell membrane. This is an uncharacterized protein from Archaeoglobus fulgidus (strain ATCC 49558 / DSM 4304 / JCM 9628 / NBRC 100126 / VC-16).